The following is a 175-amino-acid chain: Gamma-crystallin-1 (175 aa).

2 Beta/gamma crystallin 'Greek key' domains span residues 2–40 (GKIF…RVEG) and 41–83 (GNWI…RFLP). The segment at 84 to 88 (NYQGQ) is connecting peptide. Beta/gamma crystallin 'Greek key' domains are found at residues 89 to 129 (YKMR…NVFD) and 130 to 172 (GHWM…RRVY).

This sequence belongs to the beta/gamma-crystallin family. As to quaternary structure, monomer.

In terms of biological role, crystallins are the dominant structural components of the vertebrate eye lens. This is Gamma-crystallin-1 (cryg1) from Xenopus laevis (African clawed frog).